Reading from the N-terminus, the 350-residue chain is Phosphotriesterase-related protein (350 aa).

A divalent metal cation is bound by residues His22, His24, Glu169, His201, His230, and Asp298.

It belongs to the metallo-dependent hydrolases superfamily. Phosphotriesterase family. A divalent metal cation serves as cofactor.

This chain is Phosphotriesterase-related protein, found in Drosophila grimshawi (Hawaiian fruit fly).